The chain runs to 306 residues: MELKDYYAIMGVKPTDDLKTIKTAYRRLARKYHPDVSKEPDAEARFKEVAEAWEVLSDEQRRAEYDQMWQHRNDPQFSRQFQHGDGQSFNAEDFDDIFSSIFGQHARQSRQRPATRGHDIEIEVAVFLEETLTEHKRTISYNLPVYNAFGMIEQEIPKTLNVKIPAGVGNGQRIRLKGQGTPGENGGPNGDLWLVIHIAPHPLFDIVGQDLEIVVPVSPWEAALGAKVTVPTLKESILLTIPPGSQAGQRLRVKGKGLVSKKQTGDLYAVLKIVMPPKPDENTAALWQQLADAQSSFDPRKDWGKA.

Residues 5–69 enclose the J domain; sequence DYYAIMGVKP…QRRAEYDQMW (65 aa).

Its subcellular location is the cytoplasm. It is found in the nucleoid. Functionally, DNA-binding protein that preferentially recognizes a curved DNA sequence. It is probably a functional analog of DnaJ; displays overlapping activities with DnaJ, but functions under different conditions, probably acting as a molecular chaperone in an adaptive response to environmental stresses other than heat shock. Lacks autonomous chaperone activity; binds native substrates and targets them for recognition by DnaK. Its activity is inhibited by the binding of CbpM. In Escherichia coli O17:K52:H18 (strain UMN026 / ExPEC), this protein is Curved DNA-binding protein.